We begin with the raw amino-acid sequence, 218 residues long: Small ribosomal subunit protein uS3c (218 aa).

One can recognise a KH type-2 domain in the interval 39–118 (IRNFIKNYVQ…KLNIAITRIA (80 aa)).

This sequence belongs to the universal ribosomal protein uS3 family. In terms of assembly, part of the 30S ribosomal subunit.

Its subcellular location is the plastid. The protein localises to the chloroplast. This Ipomoea purpurea (Common morning glory) protein is Small ribosomal subunit protein uS3c (rps3).